We begin with the raw amino-acid sequence, 1396 residues long: Melanoma inhibitory activity protein 2 (1396 aa).

The N-terminal stretch at 1–22 is a signal peptide; the sequence is MAEVSVQRILLLVVSLAKCLEG. The Lumenal portion of the chain corresponds to 23 to 604; sequence TKLLAHLKKC…YGFMSSALSP (582 aa). The SH3 domain maps to 39–101; it reads TLISRVLALR…PRDAVEIEEV (63 aa). N-linked (GlcNAc...) asparagine glycosylation occurs at asparagine 59. Disordered regions lie at residues 197–288 and 331–361; these read EGAG…VPDE and ESNP…TDKE. The segment covering 243 to 258 has biased composition (acidic residues); it reads SDTEPTQELALEEESD. N-linked (GlcNAc...) asparagine glycosylation is present at asparagine 366. Disordered stretches follow at residues 396–421 and 525–557; these read DKGE…PEKE and PMEE…ELSV. An intramembrane segment occupies 605-625; it reads IEILLESVVAALPEDMRADFN. Residues 626 to 628 are Lumenal-facing; sequence PSG. Residues 629-649 form a helical membrane-spanning segment; the sequence is FSLELAVCVLSVGLLAVVLFL. The Cytoplasmic portion of the chain corresponds to 650 to 1396; that stretch reads WRGFRSIRSR…AADPPETQEA (747 aa). A mediates interaction with MIA3 region spans residues 651–1243; the sequence is RGFRSIRSRF…RSYNMPSLDK (593 aa). Coiled-coil stretches lie at residues 693–867 and 914–1082; these read YEGL…LVTS and AAKL…NRQK. A disordered region spans residues 1103–1396; that stretch reads PNTAFGREHS…AADPPETQEA (294 aa). The segment at 1105-1396 is proline-rich domain (PRD); probably mediates interaction with COPII coat subunits; the sequence is TAFGREHSPY…AADPPETQEA (292 aa). Residues 1135–1146 are compositionally biased toward low complexity; sequence LLEGPLRLSPLL. A compositionally biased stretch (basic and acidic residues) spans 1165–1179; the sequence is MNTERGESSYDRLSD. Residues 1252 to 1269 are compositionally biased toward polar residues; the sequence is MESSGNGTKDNLGNSNVP. Composition is skewed to pro residues over residues 1331-1342 and 1351-1368; these read RDFPGPPLPPFP and GFPP…PPPH.

This sequence belongs to the MIA/OTOR family. Interacts with MIA3. Interacts with the COPII coat subunits SEC23A, SEC23B and maybe SEC24C. Interacts with PREB; recruits PREB to endoplasmic reticulum exit sites. Interacts with APOB. As to expression, isoform 1 is expressed in liver (at protein level). Isoform 2 is highly expressed in liver and weakly in testis.

It is found in the endoplasmic reticulum membrane. Functionally, plays a role in the transport of cargos that are too large to fit into COPII-coated vesicles and require specific mechanisms to be incorporated into membrane-bound carriers and exported from the endoplasmic reticulum. Plays a role in the secretion of lipoproteins, pre-chylomicrons and pre-VLDLs, by participating in their export from the endoplasmic reticulum. Thereby, may play a role in cholesterol and triglyceride homeostasis. Required for collagen VII (COL7A1) secretion by loading COL7A1 into transport carriers and recruiting PREB/SEC12 at the endoplasmic reticulum exit sites. The polypeptide is Melanoma inhibitory activity protein 2 (Mus musculus (Mouse)).